Here is a 209-residue protein sequence, read N- to C-terminus: Uracil phosphoribosyltransferase (209 aa).

Residues R79, R104, and 131–139 (DPMLATGGS) contribute to the 5-phospho-alpha-D-ribose 1-diphosphate site. Uracil-binding positions include I194 and 199–201 (GDA). D200 contacts 5-phospho-alpha-D-ribose 1-diphosphate.

Belongs to the UPRTase family. Mg(2+) serves as cofactor.

The enzyme catalyses UMP + diphosphate = 5-phospho-alpha-D-ribose 1-diphosphate + uracil. The protein operates within pyrimidine metabolism; UMP biosynthesis via salvage pathway; UMP from uracil: step 1/1. Allosterically activated by GTP. Functionally, catalyzes the conversion of uracil and 5-phospho-alpha-D-ribose 1-diphosphate (PRPP) to UMP and diphosphate. This Exiguobacterium sibiricum (strain DSM 17290 / CCUG 55495 / CIP 109462 / JCM 13490 / 255-15) protein is Uracil phosphoribosyltransferase.